Here is an 83-residue protein sequence, read N- to C-terminus: NAD(P)H-quinone oxidoreductase subunit L, organellar chromatophore (83 aa).

A run of 2 helical transmembrane segments spans residues 17–37 (LLLA…LALY) and 53–73 (LFVY…SPFL).

This sequence belongs to the complex I NdhL subunit family. NDH-1 can be composed of about 15 different subunits; different subcomplexes with different compositions have been identified which probably have different functions.

Its subcellular location is the plastid. The protein resides in the organellar chromatophore thylakoid membrane. The enzyme catalyses a plastoquinone + NADH + (n+1) H(+)(in) = a plastoquinol + NAD(+) + n H(+)(out). It carries out the reaction a plastoquinone + NADPH + (n+1) H(+)(in) = a plastoquinol + NADP(+) + n H(+)(out). Its function is as follows. NDH-1 shuttles electrons from an unknown electron donor, via FMN and iron-sulfur (Fe-S) centers, to quinones in the respiratory and/or the photosynthetic chain. The immediate electron acceptor for the enzyme in this species is believed to be plastoquinone. Couples the redox reaction to proton translocation, and thus conserves the redox energy in a proton gradient. The chain is NAD(P)H-quinone oxidoreductase subunit L, organellar chromatophore from Paulinella chromatophora.